The primary structure comprises 377 residues: Capsule polysaccharide export inner-membrane protein BexC (377 aa).

The next 2 helical transmembrane spans lie at 23–43 and 351–371; these read LFGLTVLIPTAFSAVYFGLFA and IIATFIIGLMLYGVLNLLIAS.

The protein belongs to the BexC/CtrB/KpsE family.

Its subcellular location is the cell inner membrane. May form an ATP-driven capsule polysaccharide export apparatus, in association with the BexA, BexB and BexD proteins. The protein is Capsule polysaccharide export inner-membrane protein BexC (bexC) of Haemophilus influenzae.